We begin with the raw amino-acid sequence, 210 residues long: FMN-dependent NADH:quinone oxidoreductase (210 aa).

Residues serine 10 and 16 to 18 contribute to the FMN site; that span reads SRS.

It belongs to the azoreductase type 1 family. Homodimer. The cofactor is FMN.

It carries out the reaction 2 a quinone + NADH + H(+) = 2 a 1,4-benzosemiquinone + NAD(+). It catalyses the reaction N,N-dimethyl-1,4-phenylenediamine + anthranilate + 2 NAD(+) = 2-(4-dimethylaminophenyl)diazenylbenzoate + 2 NADH + 2 H(+). In terms of biological role, quinone reductase that provides resistance to thiol-specific stress caused by electrophilic quinones. Its function is as follows. Also exhibits azoreductase activity. Catalyzes the reductive cleavage of the azo bond in aromatic azo compounds to the corresponding amines. The protein is FMN-dependent NADH:quinone oxidoreductase of Kineococcus radiotolerans (strain ATCC BAA-149 / DSM 14245 / SRS30216).